The following is a 185-amino-acid chain: Transcription termination/antitermination protein NusG (185 aa).

The KOW domain maps to Val-134–Arg-163.

This sequence belongs to the NusG family.

Its function is as follows. Participates in transcription elongation, termination and antitermination. This is Transcription termination/antitermination protein NusG from Treponema pallidum (strain Nichols).